Reading from the N-terminus, the 434-residue chain is Histidinol dehydrogenase (434 aa).

Positions 130, 188, and 211 each coordinate NAD(+). Residues serine 237, glutamine 259, and histidine 262 each contribute to the substrate site. Zn(2+)-binding residues include glutamine 259 and histidine 262. Active-site proton acceptor residues include glutamate 326 and histidine 327. Substrate contacts are provided by histidine 327, aspartate 360, glutamate 414, and histidine 419. Aspartate 360 serves as a coordination point for Zn(2+). Residue histidine 419 participates in Zn(2+) binding.

It belongs to the histidinol dehydrogenase family. As to quaternary structure, homodimer. Zn(2+) is required as a cofactor.

It catalyses the reaction L-histidinol + 2 NAD(+) + H2O = L-histidine + 2 NADH + 3 H(+). It participates in amino-acid biosynthesis; L-histidine biosynthesis; L-histidine from 5-phospho-alpha-D-ribose 1-diphosphate: step 9/9. Its function is as follows. Catalyzes the sequential NAD-dependent oxidations of L-histidinol to L-histidinaldehyde and then to L-histidine. The protein is Histidinol dehydrogenase of Shigella flexneri.